The sequence spans 361 residues: MKAKVIVGMSGGVDSSVAAWLLKEQGYQVEGLFMKNWEQDDHNDFCPAAKDLADAQAVCNQLRIPLHTVNFSKEYWDRVFAYFLSEYEKGRTPNPDVLCNKEIKFNAFLNHALNLGADYIATGHYAKNTIEGSIGYLFKAKDREKDQTYFLHAVEPEALSKTIFPIGDFTKPQIREFAKQLGLVTHAKKDSTGICFIGEKRFKTFLNEFILAKPGEIKSTGGKTLGQHDGLMFYTLGQRQGLGIGGLQNSTDEPWYVVDKDIASNTLYVAQGSQHPMLYSQGLICGPIHWLADYENHLPLTCFAKTRYRQTDQACMISPPDNNLHYVIFSSPQRAITPGQFIVFYEKNQCLGGATIEQIIR.

ATP-binding positions include 8 to 15 (GMSGGVDS) and methionine 34. Residues 94-96 (NPD) are interaction with target base in tRNA. Cysteine 99 (nucleophile) is an active-site residue. Cysteines 99 and 195 form a disulfide. Glycine 123 is an ATP binding site. Residues 145–147 (KDQ) are interaction with tRNA. Cysteine 195 (cysteine persulfide intermediate) is an active-site residue. The segment at 307-308 (RY) is interaction with tRNA.

Belongs to the MnmA/TRMU family.

The protein resides in the cytoplasm. The catalysed reaction is S-sulfanyl-L-cysteinyl-[protein] + uridine(34) in tRNA + AH2 + ATP = 2-thiouridine(34) in tRNA + L-cysteinyl-[protein] + A + AMP + diphosphate + H(+). Functionally, catalyzes the 2-thiolation of uridine at the wobble position (U34) of tRNA, leading to the formation of s(2)U34. The protein is tRNA-specific 2-thiouridylase MnmA of Legionella pneumophila (strain Paris).